Reading from the N-terminus, the 289-residue chain is 2-hydroxy-6-oxononadienedioate/2-hydroxy-6-oxononatrienedioate hydrolase (289 aa).

The region spanning 39–275 (TVVMLHGSGP…RCGHWAQWEH (237 aa)) is the AB hydrolase-1 domain. The active-site Proton acceptor is the H269.

This sequence belongs to the AB hydrolase superfamily. MhpC family. In terms of assembly, homodimer.

The enzyme catalyses (2Z,4E)-2-hydroxy-6-oxonona-2,4-dienedioate + H2O = (2Z)-2-hydroxypenta-2,4-dienoate + succinate + H(+). It catalyses the reaction (2Z,4E,7E)-2-hydroxy-6-oxonona-2,4,7-trienedioate + H2O = (2Z)-2-hydroxypenta-2,4-dienoate + fumarate + H(+). It functions in the pathway aromatic compound metabolism; 3-phenylpropanoate degradation. Catalyzes the cleavage of the C5-C6 bond of 2-hydroxy-6-oxononadienedioate and 2-hydroxy-6-oxononatrienedioate, a dienol ring fission product of the bacterial meta-cleavage pathway for degradation of phenylpropionic acid. The protein is 2-hydroxy-6-oxononadienedioate/2-hydroxy-6-oxononatrienedioate hydrolase of Paraburkholderia xenovorans (strain LB400).